A 379-amino-acid chain; its full sequence is Class V chitinase (379 aa).

Positions 1-24 (MSSTKLISLIVSITFFLTLQCSMA) are cleaved as a signal peptide. One can recognise a GH18 domain in the interval 27-369 (VVKASYWFPA…RAASQAWDAT (343 aa)). Chitin is bound at residue Gly99. Catalysis depends on Glu140, which acts as the Proton donor. Residue Tyr259 coordinates chitin. N-linked (GlcNAc...) asparagine glycans are attached at residues Asn307 and Asn327. Residue Trp348 coordinates chitin.

This sequence belongs to the glycosyl hydrolase 18 family. Chitinase class V subfamily.

It catalyses the reaction Random endo-hydrolysis of N-acetyl-beta-D-glucosaminide (1-&gt;4)-beta-linkages in chitin and chitodextrins.. It carries out the reaction Hydrolysis of N,N'-diacetylchitobiose from the non-reducing end of chitin and chitodextrins.. Its pathway is glycan degradation; chitin degradation. Can hydrolyze glycol chitin and chitin oligosaccharides (e.g. N-acetylglucosamine) (GlcNAc)4, (GlcNAc)5 and (GlcNAc)6. Hydrolyzes N-acetylglucosamine oligomers producing dimers from the non-reducing end of the substrates. The sequence is that of Class V chitinase from Arabidopsis thaliana (Mouse-ear cress).